A 126-amino-acid chain; its full sequence is MIRTMLQGKLHRVKVTQADLHYEGSCAIDQDFLEAAGILEYEAIDIYNVDNGQRFSTYAIAAERGSRIISVNGAAARCACVGDKLIICSYVQMSDADARQHRPKVGYFEGDNHLQRKAKAVPVQVA.

The active-site Schiff-base intermediate with substrate; via pyruvic acid is Ser25. The residue at position 25 (Ser25) is a Pyruvic acid (Ser). Position 57 (Thr57) interacts with substrate. Tyr58 serves as the catalytic Proton donor. 73–75 (GAA) contributes to the substrate binding site.

It belongs to the PanD family. Heterooctamer of four alpha and four beta subunits. Requires pyruvate as cofactor. In terms of processing, is synthesized initially as an inactive proenzyme, which is activated by self-cleavage at a specific serine bond to produce a beta-subunit with a hydroxyl group at its C-terminus and an alpha-subunit with a pyruvoyl group at its N-terminus.

It localises to the cytoplasm. The catalysed reaction is L-aspartate + H(+) = beta-alanine + CO2. It participates in cofactor biosynthesis; (R)-pantothenate biosynthesis; beta-alanine from L-aspartate: step 1/1. Its function is as follows. Catalyzes the pyruvoyl-dependent decarboxylation of aspartate to produce beta-alanine. This is Aspartate 1-decarboxylase from Serratia proteamaculans (strain 568).